A 159-amino-acid polypeptide reads, in one-letter code: 6,7-dimethyl-8-ribityllumazine synthase (159 aa).

Residues Phe-23, 58–60 (AYE), and 82–84 (TII) contribute to the 5-amino-6-(D-ribitylamino)uracil site. His-90 acts as the Proton donor in catalysis. A 5-amino-6-(D-ribitylamino)uracil-binding site is contributed by Leu-115. Position 129 (Arg-129) interacts with (2S)-2-hydroxy-3-oxobutyl phosphate.

This sequence belongs to the DMRL synthase family. As to quaternary structure, forms an icosahedral capsid composed of 60 subunits, arranged as a dodecamer of pentamers.

The enzyme catalyses (2S)-2-hydroxy-3-oxobutyl phosphate + 5-amino-6-(D-ribitylamino)uracil = 6,7-dimethyl-8-(1-D-ribityl)lumazine + phosphate + 2 H2O + H(+). It functions in the pathway cofactor biosynthesis; riboflavin biosynthesis; riboflavin from 2-hydroxy-3-oxobutyl phosphate and 5-amino-6-(D-ribitylamino)uracil: step 1/2. Functionally, catalyzes the formation of 6,7-dimethyl-8-ribityllumazine by condensation of 5-amino-6-(D-ribitylamino)uracil with 3,4-dihydroxy-2-butanone 4-phosphate. This is the penultimate step in the biosynthesis of riboflavin. The chain is 6,7-dimethyl-8-ribityllumazine synthase from Blochmanniella floridana.